A 451-amino-acid chain; its full sequence is 3-carboxy-cis,cis-muconate cycloisomerase (451 aa).

Belongs to the class-II fumarase/aspartase family.

It catalyses the reaction 2-(carboxymethyl)-5-oxo-2,5-dihydro-2-furoate = 3-carboxy-cis,cis-muconate + H(+). Functionally, catalyzes an anti cycloisomerization. The protein is 3-carboxy-cis,cis-muconate cycloisomerase (pcaB) of Bradyrhizobium diazoefficiens (strain JCM 10833 / BCRC 13528 / IAM 13628 / NBRC 14792 / USDA 110).